Consider the following 1534-residue polypeptide: Slit homolog 1 protein (1534 aa).

The first 33 residues, 1–33 (MALTPGWGSSAGPVRPELWLLLWAAAWRLGASA), serve as a signal peptide directing secretion. Residues 34–61 (CPALCTCTGTTVDCHGTGLQAIPKNIPR) form the LRRNT domain. LRR repeat units lie at residues 62–83 (NTER…DFAG), 86–107 (QLRV…AFDD), 110–131 (ELER…LFQN), 134–155 (ALSR…AFRG), 158–179 (DLKN…AFRA), and 182–203 (GLEV…SFNH). N-linked (GlcNAc...) asparagine glycosylation occurs at N72. N192 carries an N-linked (GlcNAc...) asparagine glycan. Positions 215 to 265 (NHLFCDCHLAWLSQWLRQRPTIGLFTQCSGPASLRGLNVAEVQKSEFSCSG) constitute an LRRCT 1 domain. Residues 273–309 (PTCTLSSGSCPAMCTCSNGIVDCRGKGLTAIPANLPE) enclose the LRRNT 2 domain. An intrachain disulfide couples C286 to C295. LRR repeat units lie at residues 310–331 (TMTE…AFSP), 334–355 (KLRR…AFQG), 358–379 (SLNS…VFGG), 382–403 (TLQL…AFQD), and 406–427 (NLSL…TFTS). Residue N406 is glycosylated (N-linked (GlcNAc...) asparagine). The region spanning 439–489 (NPFICDCNLKWLADFLRTNPIETSGARCASPRRLANKRIGQIKSKKFRCSA) is the LRRCT 2 domain. Disulfide bonds link C443-C466, C445-C487, C513-C519, and C517-C526. Positions 504–540 (NSECNSDVVCPHKCRCEANVVECSSLKLTKIPERIPQ) constitute an LRRNT 3 domain. LRR repeat units lie at residues 541 to 562 (STAE…GMFK), 566 to 587 (HLKK…AFEG), 590 to 611 (SVSE…MFRG), 614 to 635 (GLRT…SFTG), and 638 to 659 (NVRL…AFDT). An N-linked (GlcNAc...) asparagine glycan is attached at N571. The N-linked (GlcNAc...) asparagine glycan is linked to N630. The 51-residue stretch at 671–721 (NPFNCNCQLAWLGGWLRKRKIVTGNPRCQNPDFLRQIPLQDVAFPDFRCEE) folds into the LRRCT 3 domain. 2 disulfide bridges follow: C675–C698 and C677–C719. An LRRNT 4 domain is found at 725–761 (EGGCLPRPQCPQECACLDTVVRCSNKHLRALPKGIPK). 3 N-linked (GlcNAc...) asparagine glycosylation sites follow: N762, N801, and N806. LRR repeat units follow at residues 762–783 (NVTE…LSTF), 785–806 (YLQL…SFTN), 809–830 (QLTT…AFQG), and 833–854 (SLRL…IFAD). Positions 866–916 (NPLYCDCHLRWLSSWVKTGYKEPGIARCAGPQDMEGKLLLTTPAKKFECQG) constitute an LRRCT 4 domain. 6 consecutive EGF-like domains span residues 927–962 (DLCL…RDCE), 964–1003 (SLDS…PTCG), 1005–1041 (NTDD…KACE), 1043–1081 (LVDL…DNCS), 1083–1119 (NQDD…QLCE), and 1127–1163 (PKSP…PECE). Cystine bridges form between C929–C940, C934–C950, C952–C961, C968–C979, C973–C991, C993–C1002, C1009–C1020, C1014–C1029, C1031–C1040, C1047–C1060, C1054–C1069, C1071–C1080, C1087–C1098, C1092–C1107, C1109–C1118, C1131–C1142, C1136–C1151, and C1153–C1162. N1026 is a glycosylation site (N-linked (GlcNAc...) asparagine). N-linked (GlcNAc...) asparagine glycosylation occurs at N1079. The region spanning 1166-1339 (LSVNFVDRDT…QMKPGVVPGC (174 aa)) is the Laminin G-like domain. 3 N-linked (GlcNAc...) asparagine glycosylation sites follow: N1189, N1259, and N1306. Disulfide bonds link C1313/C1339, C1342/C1352, C1347/C1362, C1364/C1373, C1381/C1391, C1386/C1401, C1403/C1412, C1422/C1432, C1427/C1442, C1444/C1453, C1459/C1498, C1477/C1512, C1488/C1528, and C1492/C1530. 3 consecutive EGF-like domains span residues 1340 to 1374 (EPCR…LHCD), 1377 to 1413 (ADGP…ALCN), and 1418 to 1454 (LAEP…ELCE). The CTCK domain occupies 1459–1534 (CRGDPVRDFH…PTKCGCALCA (76 aa)).

In terms of assembly, interacts with ROBO1 and GREM1. As to expression, predominantly expressed in adult forebrain. Expressed in fetal brain, lung and kidney.

The protein resides in the secreted. Functionally, thought to act as molecular guidance cue in cellular migration, and function appears to be mediated by interaction with roundabout homolog receptors. During neural development involved in axonal navigation at the ventral midline of the neural tube and projection of axons to different regions. SLIT1 and SLIT2 together seem to be essential for midline guidance in the forebrain by acting as repulsive signal preventing inappropriate midline crossing by axons projecting from the olfactory bulb. The protein is Slit homolog 1 protein (SLIT1) of Homo sapiens (Human).